The sequence spans 250 residues: Ubiquinone/menaquinone biosynthesis C-methyltransferase UbiE (250 aa).

S-adenosyl-L-methionine contacts are provided by residues T74, D94, 122-123, and S139; that span reads DA.

It belongs to the class I-like SAM-binding methyltransferase superfamily. MenG/UbiE family.

The enzyme catalyses a 2-demethylmenaquinol + S-adenosyl-L-methionine = a menaquinol + S-adenosyl-L-homocysteine + H(+). The catalysed reaction is a 2-methoxy-6-(all-trans-polyprenyl)benzene-1,4-diol + S-adenosyl-L-methionine = a 5-methoxy-2-methyl-3-(all-trans-polyprenyl)benzene-1,4-diol + S-adenosyl-L-homocysteine + H(+). It functions in the pathway quinol/quinone metabolism; menaquinone biosynthesis; menaquinol from 1,4-dihydroxy-2-naphthoate: step 2/2. It participates in cofactor biosynthesis; ubiquinone biosynthesis. Methyltransferase required for the conversion of demethylmenaquinol (DMKH2) to menaquinol (MKH2) and the conversion of 2-polyprenyl-6-methoxy-1,4-benzoquinol (DDMQH2) to 2-polyprenyl-3-methyl-6-methoxy-1,4-benzoquinol (DMQH2). The protein is Ubiquinone/menaquinone biosynthesis C-methyltransferase UbiE of Cereibacter sphaeroides (strain ATCC 17029 / ATH 2.4.9) (Rhodobacter sphaeroides).